We begin with the raw amino-acid sequence, 392 residues long: Na(+)/H(+) antiporter NhaA (392 aa).

11 helical membrane-spanning segments follow: residues 14 to 34, 59 to 79, 95 to 115, 125 to 145, 154 to 174, 179 to 199, 213 to 233, 254 to 274, 287 to 307, 328 to 348, and 363 to 383; these read AGGL…NSPL, LLLW…GLEV, IFPA…YLLF, GWAI…ALLG, VFLL…IALF, VSLQ…YMNW, LVLW…GVIV, GLHP…NAGV, LLPL…IFLF, IFAV…IASL, and LGIL…LRLA.

It belongs to the NhaA Na(+)/H(+) (TC 2.A.33) antiporter family.

It is found in the cell inner membrane. It catalyses the reaction Na(+)(in) + 2 H(+)(out) = Na(+)(out) + 2 H(+)(in). Its function is as follows. Na(+)/H(+) antiporter that extrudes sodium in exchange for external protons. The chain is Na(+)/H(+) antiporter NhaA from Yersinia enterocolitica serotype O:8 / biotype 1B (strain NCTC 13174 / 8081).